A 140-amino-acid polypeptide reads, in one-letter code: Large ribosomal subunit protein bL21 (140 aa).

The interval Ser106–Asn140 is disordered.

It belongs to the bacterial ribosomal protein bL21 family. As to quaternary structure, part of the 50S ribosomal subunit. Contacts protein L20.

Its function is as follows. This protein binds to 23S rRNA in the presence of protein L20. In Paracoccus denitrificans (strain Pd 1222), this protein is Large ribosomal subunit protein bL21.